The sequence spans 319 residues: Glutathione synthetase (319 aa).

An ATP-grasp domain is found at 127 to 311 (KIFVTEFADL…VASLLWDAIE (185 aa)). Position 153–209 (153–209 (RNEMGDIILKPLYGNGGAGVFHSARDDRNFSSLLEMFGQMFREPYIAQEYLPDVRKG)) interacts with ATP. Positions 282 and 284 each coordinate Mg(2+).

The protein belongs to the prokaryotic GSH synthase family. Mg(2+) serves as cofactor. It depends on Mn(2+) as a cofactor.

It carries out the reaction gamma-L-glutamyl-L-cysteine + glycine + ATP = glutathione + ADP + phosphate + H(+). It participates in sulfur metabolism; glutathione biosynthesis; glutathione from L-cysteine and L-glutamate: step 2/2. This chain is Glutathione synthetase, found in Agrobacterium fabrum (strain C58 / ATCC 33970) (Agrobacterium tumefaciens (strain C58)).